Here is a 149-residue protein sequence, read N- to C-terminus: 3-dehydroquinate dehydratase (149 aa).

Tyr-25 functions as the Proton acceptor in the catalytic mechanism. The substrate site is built by Asn-76, His-82, and Asp-89. The active-site Proton donor is His-102. Substrate is bound by residues Leu-103–Ser-104 and Arg-113.

The protein belongs to the type-II 3-dehydroquinase family. As to quaternary structure, homododecamer.

It carries out the reaction 3-dehydroquinate = 3-dehydroshikimate + H2O. It functions in the pathway metabolic intermediate biosynthesis; chorismate biosynthesis; chorismate from D-erythrose 4-phosphate and phosphoenolpyruvate: step 3/7. In terms of biological role, catalyzes a trans-dehydration via an enolate intermediate. The protein is 3-dehydroquinate dehydratase of Acaryochloris marina (strain MBIC 11017).